Consider the following 237-residue polypeptide: Phosphoribosylaminoimidazole-succinocarboxamide synthase (237 aa).

This sequence belongs to the SAICAR synthetase family.

It catalyses the reaction 5-amino-1-(5-phospho-D-ribosyl)imidazole-4-carboxylate + L-aspartate + ATP = (2S)-2-[5-amino-1-(5-phospho-beta-D-ribosyl)imidazole-4-carboxamido]succinate + ADP + phosphate + 2 H(+). Its pathway is purine metabolism; IMP biosynthesis via de novo pathway; 5-amino-1-(5-phospho-D-ribosyl)imidazole-4-carboxamide from 5-amino-1-(5-phospho-D-ribosyl)imidazole-4-carboxylate: step 1/2. This is Phosphoribosylaminoimidazole-succinocarboxamide synthase from Hamiltonella defensa subsp. Acyrthosiphon pisum (strain 5AT).